The chain runs to 366 residues: Flagellar P-ring protein (366 aa).

An N-terminal signal peptide occupies residues 1–27; sequence MKSKYSIFCMFLLRGFIFLGTVFSLNS.

Belongs to the FlgI family. In terms of assembly, the basal body constitutes a major portion of the flagellar organelle and consists of four rings (L,P,S, and M) mounted on a central rod.

The protein resides in the periplasm. Its subcellular location is the bacterial flagellum basal body. Its function is as follows. Assembles around the rod to form the L-ring and probably protects the motor/basal body from shearing forces during rotation. The sequence is that of Flagellar P-ring protein from Leptospira interrogans serogroup Icterohaemorrhagiae serovar copenhageni (strain Fiocruz L1-130).